The primary structure comprises 347 residues: UDP-glucose 4-epimerase (347 aa).

Residues Gly11 to Ile13, Asp32 to Asn36, Asp65 to Ile66, Phe87, and Lys91 contribute to the NAD(+) site. Ser131–Thr133 serves as a coordination point for substrate. The active-site Proton acceptor is Tyr156. NAD(+)-binding residues include Lys160 and Tyr184. Residues Tyr184–Asn186, Asn205–Leu207, Asn223–Phe225, Arg238, and Arg299–Asp302 each bind substrate.

This sequence belongs to the NAD(P)-dependent epimerase/dehydratase family. Homodimer. Requires NAD(+) as cofactor.

The catalysed reaction is UDP-alpha-D-glucose = UDP-alpha-D-galactose. It catalyses the reaction UDP-N-acetyl-alpha-D-glucosamine = UDP-N-acetyl-alpha-D-galactosamine. It functions in the pathway carbohydrate metabolism; galactose metabolism. In terms of biological role, catalyzes two distinct but analogous reactions: the reversible epimerization of UDP-glucose to UDP-galactose and the reversible epimerization of UDP-N-acetylglucosamine to UDP-N-acetylgalactosamine. The reaction with UDP-Gal plays a critical role in the Leloir pathway of galactose catabolism in which galactose is converted to the glycolytic intermediate glucose 6-phosphate. It contributes to the catabolism of dietary galactose and enables the endogenous biosynthesis of both UDP-Gal and UDP-GalNAc when exogenous sources are limited. Both UDP-sugar interconversions are important in the synthesis of glycoproteins and glycolipids. The protein is UDP-glucose 4-epimerase (Gale) of Mus musculus (Mouse).